Consider the following 90-residue polypeptide: UPF0298 protein SSU05_1549 (90 aa).

The protein belongs to the UPF0298 family.

Its subcellular location is the cytoplasm. This is UPF0298 protein SSU05_1549 from Streptococcus suis (strain 05ZYH33).